An 862-amino-acid chain; its full sequence is Transcription factor E2F7 (862 aa).

2 consecutive DNA-binding regions follow at residues arginine 140 to glycine 209 and arginine 279 to glycine 364. 3 disordered regions span residues proline 561–leucine 592, threonine 617–glutamate 643, and lysine 788–asparagine 862. Over residues aspartate 564–serine 574 the composition is skewed to polar residues. Residues lysine 575–alanine 590 are compositionally biased toward basic and acidic residues. 2 stretches are compositionally biased toward polar residues: residues glutamate 633–glutamate 643 and aspartate 832–glutamine 851.

This sequence belongs to the E2F/DP family. Homodimer and heterodimer: mainly forms homodimers and, to a lesser extent, heterodimers with e2f8.

Its subcellular location is the nucleus. Functionally, atypical E2F transcription factor that participates in various processes such as angiogenesis and polyploidization of specialized cells. Mainly acts as a transcription repressor that binds DNA independently of DP proteins and specifically recognizes the E2 recognition site 5'-TTTC[CG]CGC-3'. Directly represses transcription of classical E2F transcription factors such as e2f1. Acts as a regulator of S-phase by recognizing and binding the E2-related site 5'-TTCCCGCC-3' and mediating repression of G1/S-regulated genes. Acts as a promoter of sprouting angiogenesis, possibly by acting as a transcription activator. The polypeptide is Transcription factor E2F7 (e2f7) (Xenopus tropicalis (Western clawed frog)).